The following is a 599-amino-acid chain: Aspartate--tRNA(Asp/Asn) ligase (599 aa).

E172 provides a ligand contact to L-aspartate. The segment at 196 to 199 (QLFK) is aspartate. R218 contacts L-aspartate. Residues 218 to 220 (RDE) and Q227 contribute to the ATP site. H454 contacts L-aspartate. E488 serves as a coordination point for ATP. R495 contributes to the L-aspartate binding site. 540 to 543 (GLDR) serves as a coordination point for ATP.

The protein belongs to the class-II aminoacyl-tRNA synthetase family. Type 1 subfamily. In terms of assembly, homodimer.

Its subcellular location is the cytoplasm. The catalysed reaction is tRNA(Asx) + L-aspartate + ATP = L-aspartyl-tRNA(Asx) + AMP + diphosphate. Its function is as follows. Aspartyl-tRNA synthetase with relaxed tRNA specificity since it is able to aspartylate not only its cognate tRNA(Asp) but also tRNA(Asn). Reaction proceeds in two steps: L-aspartate is first activated by ATP to form Asp-AMP and then transferred to the acceptor end of tRNA(Asp/Asn). This is Aspartate--tRNA(Asp/Asn) ligase from Methylibium petroleiphilum (strain ATCC BAA-1232 / LMG 22953 / PM1).